Here is a 381-residue protein sequence, read N- to C-terminus: Carbamoyl phosphate synthase small chain (381 aa).

Positions 1-192 are CPSase; it reads MSKPAILALE…SGYADVSQGD (192 aa). Residues serine 47, glycine 244, and glycine 246 each coordinate L-glutamine. One can recognise a Glutamine amidotransferase type-1 domain in the interval 196–381; sequence HVVAYDYGMK…RFVEMMRHRR (186 aa). The active-site Nucleophile is cysteine 272. 5 residues coordinate L-glutamine: leucine 273, glutamine 276, asparagine 314, glycine 316, and phenylalanine 317. Residues histidine 356 and glutamate 358 contribute to the active site.

The protein belongs to the CarA family. In terms of assembly, composed of two chains; the small (or glutamine) chain promotes the hydrolysis of glutamine to ammonia, which is used by the large (or ammonia) chain to synthesize carbamoyl phosphate. Tetramer of heterodimers (alpha,beta)4.

The enzyme catalyses hydrogencarbonate + L-glutamine + 2 ATP + H2O = carbamoyl phosphate + L-glutamate + 2 ADP + phosphate + 2 H(+). The catalysed reaction is L-glutamine + H2O = L-glutamate + NH4(+). Its pathway is amino-acid biosynthesis; L-arginine biosynthesis; carbamoyl phosphate from bicarbonate: step 1/1. It participates in pyrimidine metabolism; UMP biosynthesis via de novo pathway; (S)-dihydroorotate from bicarbonate: step 1/3. In terms of biological role, small subunit of the glutamine-dependent carbamoyl phosphate synthetase (CPSase). CPSase catalyzes the formation of carbamoyl phosphate from the ammonia moiety of glutamine, carbonate, and phosphate donated by ATP, constituting the first step of 2 biosynthetic pathways, one leading to arginine and/or urea and the other to pyrimidine nucleotides. The small subunit (glutamine amidotransferase) binds and cleaves glutamine to supply the large subunit with the substrate ammonia. The polypeptide is Carbamoyl phosphate synthase small chain (Halomonas eurihalina).